A 145-amino-acid chain; its full sequence is Small ribosomal subunit protein bS16 (145 aa).

Positions 82–145 (IKERAATNNP…EAAAEEQTEA (64 aa)) are disordered. A compositionally biased stretch (basic and acidic residues) spans 95-115 (EPGKKAKERAEERAEKAREAA). The segment covering 116-137 (EAAAAAAAAPAEEAAAEAPAEA) has biased composition (low complexity).

Belongs to the bacterial ribosomal protein bS16 family.

This is Small ribosomal subunit protein bS16 from Novosphingobium aromaticivorans (strain ATCC 700278 / DSM 12444 / CCUG 56034 / CIP 105152 / NBRC 16084 / F199).